A 338-amino-acid polypeptide reads, in one-letter code: Ketol-acid reductoisomerase (NADP(+)) (338 aa).

The KARI N-terminal Rossmann domain maps to 1–181 (MKVYYDKDAD…GGTKGGVIET (181 aa)). NADP(+) contacts are provided by residues 24-27 (YGSQ), R47, and S52. The active site involves H107. G133 provides a ligand contact to NADP(+). Residues 182–327 (NFREETETDL…SQLRAMMPWI (146 aa)) enclose the KARI C-terminal knotted domain. D190, E194, E226, and E230 together coordinate Mg(2+). Residue S251 coordinates substrate.

Belongs to the ketol-acid reductoisomerase family. Mg(2+) serves as cofactor.

The enzyme catalyses (2R)-2,3-dihydroxy-3-methylbutanoate + NADP(+) = (2S)-2-acetolactate + NADPH + H(+). The catalysed reaction is (2R,3R)-2,3-dihydroxy-3-methylpentanoate + NADP(+) = (S)-2-ethyl-2-hydroxy-3-oxobutanoate + NADPH + H(+). It functions in the pathway amino-acid biosynthesis; L-isoleucine biosynthesis; L-isoleucine from 2-oxobutanoate: step 2/4. Its pathway is amino-acid biosynthesis; L-valine biosynthesis; L-valine from pyruvate: step 2/4. In terms of biological role, involved in the biosynthesis of branched-chain amino acids (BCAA). Catalyzes an alkyl-migration followed by a ketol-acid reduction of (S)-2-acetolactate (S2AL) to yield (R)-2,3-dihydroxy-isovalerate. In the isomerase reaction, S2AL is rearranged via a Mg-dependent methyl migration to produce 3-hydroxy-3-methyl-2-ketobutyrate (HMKB). In the reductase reaction, this 2-ketoacid undergoes a metal-dependent reduction by NADPH to yield (R)-2,3-dihydroxy-isovalerate. The protein is Ketol-acid reductoisomerase (NADP(+)) of Methylobacillus flagellatus (strain ATCC 51484 / DSM 6875 / VKM B-1610 / KT).